An 855-amino-acid polypeptide reads, in one-letter code: Mitofusin FZO1 (855 aa).

Basic and acidic residues predominate over residues 1–19 (MSEGKQQFKDSNKPHKDST). The segment at 1-27 (MSEGKQQFKDSNKPHKDSTDQDDDAAT) is disordered. Over 1 to 705 (MSEGKQQFKD…PSLLFTSKIP (705 aa)) the chain is Cytoplasmic. The interval 91–190 (NYNNNRVLLK…KRVDDVSSKV (100 aa)) is HRN. Residues 184 to 467 (DDVSSKVFIT…KKRSLSKLLP (284 aa)) form the Dynamin-type G domain. GTP contacts are provided by residues 197–202 (NTGKSA) and 370–373 (KKFD). Lys398 is covalently cross-linked (Glycyl lysine isopeptide (Lys-Gly) (interchain with G-Cter in ubiquitin)). Ser408 contributes to the GTP binding site. The segment covering 413-433 (ELPHYHNENDNEDHGDRKPDD) has biased composition (basic and acidic residues). Residues 413 to 447 (ELPHYHNENDNEDHGDRKPDDDPYSSSDPDPDFDS) are disordered. A Glycyl lysine isopeptide (Lys-Gly) (interchain with G-Cter in ubiquitin) cross-link involves residue Lys464. An HR1 region spans residues 484-547 (KSNMKMYSEE…KEALLNALDV (64 aa)). Residues 630 to 843 (GKRLKVSLSI…QSLYEGTVAQ (214 aa)) form a required for interaction with UGO1 region. The helical transmembrane segment at 706-726 (TLTLYFLGSTKVVGNIILNGI) threads the bilayer. Topologically, residues 727–736 (KLSSWSSLKK) are mitochondrial intermembrane. A helical transmembrane segment spans residues 737–757 (LSVPVIVVGSLLGLTYLIHDL). The Cytoplasmic portion of the chain corresponds to 758 to 855 (PRALPMNLSI…MVEEINLDID (98 aa)). Residues 769–831 (YKRKLQELDY…KKESNLLSIK (63 aa)) form an HR2 region. Residues 798 to 825 (TREILRSCEIIMDKKQITKKELENKKES) are a coiled coil.

This sequence belongs to the TRAFAC class dynamin-like GTPase superfamily. Dynamin/Fzo/YdjA family. Mitofusin subfamily. As to quaternary structure, homodimer. Dimerization depends on GTP binding. Component of a large multiprotein complex of 800 kDa. Binds the cytoplasmic domain of UGO1 which binds MGM1 through its intermembrane space domain. Interacts with MDM30. Interacts with UBP2 and UBP12. Interacts (when ubiquitinated) with DOA1; the interaction recruits FZO1 to CDC48 and promotes FZO1 proteasomal degradation. In terms of processing, ubiquitinated at Lys-398 and Lys-464. MDM30 and UGO1 are involved in ubiquitination. Deubiquitinated by UBP2 and UBP12. UBP2 and UBP12 recognize distinct ubiquitin chains on FZO1 that have opposing effects on mitochondrial fusion. UBP2 removes ubiquitin chains that initiate proteolysis of FZO1 and inhibit fusion. UBP12 recognizes ubiquitin chains that stabilize FZO1 and promote mitochondrial fusion. UBP12 deubiquitylates FZO1 only after oligomerization.

It is found in the mitochondrion outer membrane. It carries out the reaction GTP + H2O = GDP + phosphate + H(+). In terms of biological role, essential transmembrane GTPase, which mediates mitochondrial fusion. Fusion proceeds through several steps; first mitochondria are tethered together, then brought into close contact, followed by the formation of a docking ring around contact areas, and finally membrane fusion. Fusion of mitochondria occurs in many cell types and constitutes an important step in mitochondrial morphology, which is balanced between fusion and fission, mediated by FZO1 and DNM1, respectively. Functions antagonistically with DNM1. Probably acts by forming membrane contact sites that mediate mitochondrial membrane fusion. Mitochondrial docking and fusion requires GTP hydrolysis. Mitochondrial fusion also promotes increased lifespan. The protein is Mitofusin FZO1 (FZO1) of Saccharomyces cerevisiae (strain ATCC 204508 / S288c) (Baker's yeast).